The sequence spans 916 residues: Phosphoenolpyruvate carboxylase (916 aa).

Residues His144 and Lys578 contribute to the active site.

Belongs to the PEPCase type 1 family. Mg(2+) is required as a cofactor.

It carries out the reaction oxaloacetate + phosphate = phosphoenolpyruvate + hydrogencarbonate. In terms of biological role, forms oxaloacetate, a four-carbon dicarboxylic acid source for the tricarboxylic acid cycle. This Aromatoleum aromaticum (strain DSM 19018 / LMG 30748 / EbN1) (Azoarcus sp. (strain EbN1)) protein is Phosphoenolpyruvate carboxylase.